A 263-amino-acid polypeptide reads, in one-letter code: Thymidylate kinase (263 aa).

The transit peptide at 1–51 (MKRICSVSSVQLFSRSFRALASPRSLNYPLQCIKRSSVRMESSNFSSGVRT) directs the protein to the mitochondrion. Residue 66–74 (GLDRSGKST) participates in ATP binding.

It belongs to the thymidylate kinase family. As to expression, expressed in root, rosette leaves, flower buds, flowers and siliques.

The protein localises to the mitochondrion. It localises to the cytoplasm. Its subcellular location is the nucleus. The protein resides in the nucleoplasm. It carries out the reaction dTMP + ATP = dTDP + ADP. It participates in pyrimidine metabolism; dTTP biosynthesis. Its function is as follows. Catalyzes the conversion of dTMP to dTDP. Involved in the regulation of DNA replication. Is essential to promote the first division of the zygote. In Arabidopsis thaliana (Mouse-ear cress), this protein is Thymidylate kinase.